Consider the following 849-residue polypeptide: G-type lectin S-receptor-like serine/threonine-protein kinase B120 (849 aa).

The signal sequence occupies residues 1–25 (MRFFRKTSLYLSLFLYFFLYESSMA). Residues 26-153 (ANTIRRGESL…DTDRPIWESF (128 aa)) form the Bulb-type lectin domain. Topologically, residues 26–438 (ANTIRRGESL…SEVGENRKTK (413 aa)) are extracellular. N-linked (GlcNAc...) asparagine glycosylation is found at asparagine 110, asparagine 191, asparagine 210, asparagine 230, asparagine 273, and asparagine 282. Residues 295–332 (PDSECDQYNRCGKFGICDMKGSNGICSCIHGYEQVSVG) enclose the EGF-like; atypical domain. Intrachain disulfides connect cysteine 299-cysteine 311 and cysteine 305-cysteine 320. N-linked (GlcNAc...) asparagine glycosylation is found at asparagine 333, asparagine 349, and asparagine 388. Positions 346-427 (CERNISVGED…GGSSLHIRLA (82 aa)) constitute a PAN domain. Cystine bridges form between cysteine 381/cysteine 402 and cysteine 385/cysteine 391. A helical membrane pass occupies residues 439–459 (IAVIVAVLVGVILIGIFALLL). At 460-849 (WRFKRKKDVS…EITSTVVLGR (390 aa)) the chain is on the cytoplasmic side. The Protein kinase domain maps to 529–814 (FCKENELGRG…TLAAPRQPTF (286 aa)). Residues 535–543 (LGRGGFGPV) and lysine 557 contribute to the ATP site. Serine 563 carries the post-translational modification Phosphoserine. Residues 618–635 (TKQALIDWKLRFSIIEGI) are caM-binding. Aspartate 654 functions as the Proton acceptor in the catalytic mechanism. Phosphoserine is present on residues serine 658 and serine 671. Threonine 688 is modified (phosphothreonine). Residues serine 732 and serine 837 each carry the phosphoserine modification. Threonine 844 carries the phosphothreonine modification.

Belongs to the protein kinase superfamily. Ser/Thr protein kinase family.

It localises to the cell membrane. The catalysed reaction is L-seryl-[protein] + ATP = O-phospho-L-seryl-[protein] + ADP + H(+). It carries out the reaction L-threonyl-[protein] + ATP = O-phospho-L-threonyl-[protein] + ADP + H(+). The protein is G-type lectin S-receptor-like serine/threonine-protein kinase B120 (B120) of Arabidopsis thaliana (Mouse-ear cress).